The sequence spans 400 residues: Arrestin, lateral eye (400 aa).

The protein belongs to the arrestin family. Post-translationally, phosphorylated.

Functionally, plays an important role in the photoreceptor transduction. This chain is Arrestin, lateral eye, found in Limulus polyphemus (Atlantic horseshoe crab).